We begin with the raw amino-acid sequence, 255 residues long: Putative glycyl-radical enzyme activating enzyme MJ1632 (255 aa).

In terms of domain architecture, Radical SAM core spans 30-245; it reads SHISLSDKIT…SNVSCSLDFK (216 aa). 3 residues coordinate [4Fe-4S] cluster: cysteine 45, cysteine 49, and cysteine 52. S-adenosyl-L-methionine contacts are provided by residues 51–53, glycine 88, and 134–136; these read YCF and DLK.

The protein belongs to the organic radical-activating enzymes family. Requires [4Fe-4S] cluster as cofactor.

It carries out the reaction glycyl-[protein] + reduced [flavodoxin] + S-adenosyl-L-methionine = glycin-2-yl radical-[protein] + semiquinone [flavodoxin] + 5'-deoxyadenosine + L-methionine + H(+). In Methanocaldococcus jannaschii (strain ATCC 43067 / DSM 2661 / JAL-1 / JCM 10045 / NBRC 100440) (Methanococcus jannaschii), this protein is Putative glycyl-radical enzyme activating enzyme MJ1632.